We begin with the raw amino-acid sequence, 593 residues long: Progranulin (593 aa).

A signal peptide spans 1-17 (MWTLVSWVALTAGLVAG). Asparagine 118 carries an N-linked (GlcNAc...) asparagine glycan. 2 disulfide bridges follow: cysteine 126–cysteine 139 and cysteine 133–cysteine 149. N-linked (GlcNAc...) asparagine glycans are attached at residues asparagine 236 and asparagine 265. Intrachain disulfides connect cysteine 284-cysteine 296, cysteine 290-cysteine 306, cysteine 297-cysteine 314, cysteine 307-cysteine 321, cysteine 315-cysteine 328, cysteine 322-cysteine 335, cysteine 366-cysteine 378, cysteine 372-cysteine 388, cysteine 397-cysteine 410, and cysteine 404-cysteine 416. Asparagine 368 carries an N-linked (GlcNAc...) asparagine glycan. Asparagine 530 is a glycosylation site (N-linked (GlcNAc...) asparagine).

Belongs to the granulin family. As to quaternary structure, progranulin is secreted as a homodimer. Interacts with SLPI; interaction protects progranulin from proteolysis. Interacts (via region corresponding to granulin-7 peptide) with CTSD; stabilizes CTSD and increases its proteolytic activity. Interacts (via region corresponding to granulin-7 peptide) with SORT1; this interaction mediates endocytosis and lysosome delivery of progranulin; interaction occurs at the neuronal cell surface in a stressed nervous system. Interacts with PSAP; facilitates lysosomal delivery of progranulin from the extracellular space and the biosynthetic pathway. Forms a complex with PSAP and M6PR; PSAP bridges the binding between progranulin and M6PR. Forms a complex with PSAP and SORT1; progranulin bridges the interaction between PSAP and SORT1; facilitates lysosomal targeting of PSAP via SORT1; interaction enhances PSAP uptake in primary cortical neurons. Interacts (via regions corresponding to granulin-2 and granulin-7 peptides) with GBA1; this interaction prevents aggregation of GBA1-SCARB2 complex via interaction with HSPA1A upon stress. Interacts (via region corresponding to granulin-7 peptide) with HSPA1A; mediates recruitment of HSPA1A to GBA1 and prevents GBA1 aggregation in response to stress. In terms of processing, cleaved by ELANE; proteolysis is blocked by SLPI and is concentration- and time-dependent and induces CXCL8/IL-8 production; granulin-3 and granulin-4 are resistant to ELANE. Cleaved by CTSL in lysosome thus regulating the maturation and turnover of progranulin within the lysosome. As to expression, in myelogenous leukemic cell lines of promonocytic, promyelocytic, and proerythroid lineage, in fibroblasts, and very strongly in epithelial cell lines. Present in inflammatory cells and bone marrow. Highest levels in kidney.

Its subcellular location is the secreted. The protein resides in the lysosome. In terms of biological role, secreted protein that acts as a key regulator of lysosomal function and as a growth factor involved in inflammation, wound healing and cell proliferation. Regulates protein trafficking to lysosomes, and also the activity of lysosomal enzymes. Also facilitates the acidification of lysosomes, causing degradation of mature CTSD by CTSB. In addition, functions as a wound-related growth factor that acts directly on dermal fibroblasts and endothelial cells to promote division, migration and the formation of capillary-like tubule structures. Also promotes epithelial cell proliferation by blocking TNF-mediated neutrophil activation preventing release of oxidants and proteases. Moreover, modulates inflammation in neurons by preserving neurons survival, axonal outgrowth and neuronal integrity. Functionally, promotes proliferation of the epithelial cell line A431 in culture. Its function is as follows. Inhibits epithelial cell proliferation and induces epithelial cells to secrete IL-8. Stabilizes CTSD through interaction with CTSD leading to maintain its aspartic-type peptidase activity. The protein is Progranulin of Homo sapiens (Human).